A 249-amino-acid polypeptide reads, in one-letter code: Inhibitor of growth protein 4 (249 aa).

A coiled-coil region spans residues 25–118 (FQLMRDLDQR…ADLKEKQIES (94 aa)). 3 positions are modified to N6-acetyllysine: K112, K127, and K129. Residues 115–163 (QIESSDYDSSSSKGKKKGRTQKEKKAARARSKGKNSDEEAPKAAQKKLK) form a disordered region. Positions 127 to 148 (KGKKKGRTQKEKKAARARSKGK) match the Bipartite nuclear localization signal motif. R133 is subject to Citrulline. N6-acetyllysine is present on residues K146, K148, and K156. R166 carries the citrulline modification. The segment at 196–245 (PTYCLCHQVSYGEMIGCDNPDCSIEWFHFACVGLTTKPRGKWFCPRCSQE) adopts a PHD-type zinc-finger fold. Positions 199, 201, 212, 217, 223, 226, 239, and 242 each coordinate Zn(2+).

The protein belongs to the ING family. In terms of assembly, homodimer. Component of the HBO1 complex composed of KAT7/HBO1, MEAF6, ING4 or ING5, and one scaffold subunit: complexes containing BRPF scaffold (BRPF1, BRD1/BRPF2 or BRPF3) direct KAT7/HBO1 specificity towards H3K14ac, while complexes containing JADE scaffold (JADE1, JADE2 and JADE3) mediate acetylation of histone H4. Interacts with H3K4me3 and to a lesser extent with H3K4me2, the interaction augments KAT7/HBO1 acetylation activity on H3 tails. Interacts with EP300, RELA and TP53; these interactions may be indirect. Interacts with EGLN1. Interacts with BCL2A1. Post-translationally, citrullination by PADI4 within the nuclear localization signal disrupts the interaction with p53 and increases susceptibility to degradation. Isoform 2, isoform 3, isoform 4 and isoform 5 are expressed in the mammary gland, ovary, spleen and muscle. In terms of tissue distribution, expressed in the mammary gland, ovary, spleen and muscle.

It localises to the nucleus. Functionally, component of HBO1 complexes, which specifically mediate acetylation of histone H3 at 'Lys-14' (H3K14ac), and have reduced activity toward histone H4. Through chromatin acetylation it may function in DNA replication. May inhibit tumor progression by modulating the transcriptional output of signaling pathways which regulate cell proliferation. Can suppress brain tumor angiogenesis through transcriptional repression of RELA/NFKB3 target genes when complexed with RELA. May also specifically suppress loss of contact inhibition elicited by activated oncogenes such as MYC. Represses hypoxia inducible factor's (HIF) activity by interacting with HIF prolyl hydroxylase 2 (EGLN1). Can enhance apoptosis induced by serum starvation in mammary epithelial cell line HC11. The polypeptide is Inhibitor of growth protein 4 (Ing4) (Mus musculus (Mouse)).